A 380-amino-acid polypeptide reads, in one-letter code: Cytochrome b (380 aa).

4 helical membrane passes run 33–53 (FGSL…FLAM), 77–98 (WMIR…FLHI), 113–133 (WNIG…GYVL), and 178–198 (FFTL…LHLL). Heme b is bound by residues histidine 83 and histidine 97. 2 residues coordinate heme b: histidine 182 and histidine 196. Residue histidine 201 participates in a ubiquinone binding. The next 4 membrane-spanning stretches (helical) occupy residues 226–246 (IKDI…TLLS), 288–308 (LGGV…PALH), 320–340 (LSQF…WIGG), and 347–367 (FITI…LLMP).

The protein belongs to the cytochrome b family. As to quaternary structure, the cytochrome bc1 complex contains 11 subunits: 3 respiratory subunits (MT-CYB, CYC1 and UQCRFS1), 2 core proteins (UQCRC1 and UQCRC2) and 6 low-molecular weight proteins (UQCRH/QCR6, UQCRB/QCR7, UQCRQ/QCR8, UQCR10/QCR9, UQCR11/QCR10 and a cleavage product of UQCRFS1). This cytochrome bc1 complex then forms a dimer. Heme b serves as cofactor.

It is found in the mitochondrion inner membrane. In terms of biological role, component of the ubiquinol-cytochrome c reductase complex (complex III or cytochrome b-c1 complex) that is part of the mitochondrial respiratory chain. The b-c1 complex mediates electron transfer from ubiquinol to cytochrome c. Contributes to the generation of a proton gradient across the mitochondrial membrane that is then used for ATP synthesis. The protein is Cytochrome b (MT-CYB) of Pongo pygmaeus (Bornean orangutan).